Here is a 639-residue protein sequence, read N- to C-terminus: Coiled-coil domain-containing protein 93 homolog (639 aa).

The interval 250 to 275 is disordered; it reads KLESQLSGKDGSGKDTTEAEREEEEK. The span at 260 to 275 shows a compositional bias: basic and acidic residues; that stretch reads GSGKDTTEAEREEEEK. Residues 332–492 adopt a coiled-coil conformation; it reads AEKLHRQKIT…KNRDISLIQR (161 aa).

This sequence belongs to the CCDC93 family.

The chain is Coiled-coil domain-containing protein 93 homolog from Dictyostelium discoideum (Social amoeba).